The primary structure comprises 164 residues: Peptidyl-prolyl cis-trans isomerase A (164 aa).

Position 1 is an N-acetylmethionine (M1). The residue at position 2 (V2) is an N-acetylvaline; in Peptidyl-prolyl cis-trans isomerase A, N-terminally processed. The region spanning 7–163 is the PPIase cyclophilin-type domain; that stretch reads FFDITADGEP…KKITISDCGQ (157 aa). N6-acetyllysine; alternate is present on K28. A Glycyl lysine isopeptide (Lys-Gly) (interchain with G-Cter in SUMO2); alternate cross-link involves residue K28. K28 participates in a covalent cross-link: Glycyl lysine isopeptide (Lys-Gly) (interchain with G-Cter in ubiquitin); alternate. 2 positions are modified to N6-acetyllysine: K44 and K76. Residue S77 is modified to Phosphoserine. K82 carries the post-translational modification N6-acetyllysine; alternate. A Glycyl lysine isopeptide (Lys-Gly) (interchain with G-Cter in SUMO2); alternate cross-link involves residue K82. Position 93 is a phosphothreonine (T93). Residue N108 is glycosylated (N-linked (GlcNAc...) asparagine). K125, K131, and K133 each carry N6-acetyllysine.

Belongs to the cyclophilin-type PPIase family. PPIase A subfamily. In terms of assembly, interacts with protein phosphatase PPP3CA/calcineurin A. Interacts with isoform 2 of BSG/CD147. Interacts with FOXO1; the interaction promotes FOXO1 dephosphorylation, nuclear accumulation and transcriptional activity. Interacts with integrin ITGA2B:ITGB3; the interaction is ROS and peptidyl-prolyl cis-trans isomerase (PPIase) activity-dependent and is increased in the presence of thrombin. Interacts with MAP3K5. Interacts with TARDBP; the interaction is dependent on the RNA-binding activity of TARDBP and the PPIase activity of PPIA/CYPA and the acetylation of PPIA/CYPA at Lys-125 favors the interaction. Interacts with HNRNPA1, HNRNPA2B1, HNRNPC, RBMX, HNRNPK and HNRNPM. Post-translationally, acetylation at Lys-125 markedly inhibits catalysis of cis to trans isomerization. PPIA acetylation also antagonizes the immunosuppressive effects of cyclosporine by inhibiting the sequential steps of cyclosporine binding and calcineurin inhibition. Acetylation at Lys-125 favors the interaction with TARDBP.

It localises to the cytoplasm. It is found in the secreted. Its subcellular location is the nucleus. The enzyme catalyses [protein]-peptidylproline (omega=180) = [protein]-peptidylproline (omega=0). With respect to regulation, binds cyclosporin A (CsA). CsA mediates some of its effects via an inhibitory action on PPIase. Functionally, catalyzes the cis-trans isomerization of proline imidic peptide bonds in oligopeptides. Exerts a strong chemotactic effect on leukocytes partly through activation of one of its membrane receptors BSG/CD147, initiating a signaling cascade that culminates in MAPK/ERK activation. Activates endothelial cells (ECs) in a proinflammatory manner by stimulating activation of NF-kappa-B and ERK, JNK and p38 MAP-kinases and by inducing expression of adhesion molecules including SELE and VCAM1. Induces apoptosis in ECs by promoting the FOXO1-dependent expression of CCL2 and BCL2L11 which are involved in EC chemotaxis and apoptosis. In response to oxidative stress, initiates proapoptotic and antiapoptotic signaling in ECs via activation of NF-kappa-B and AKT1 and up-regulation of antiapoptotic protein BCL2. Negatively regulates MAP3K5/ASK1 kinase activity, autophosphorylation and oxidative stress-induced apoptosis mediated by MAP3K5/ASK1. Necessary for the assembly of TARDBP in heterogeneous nuclear ribonucleoprotein (hnRNP) complexes and regulates TARDBP binding to RNA UG repeats and TARDBP-dependent expression of HDAC6, ATG7 and VCP which are involved in clearance of protein aggregates. Plays an important role in platelet activation and aggregation. Regulates calcium mobilization and integrin ITGA2B:ITGB3 bidirectional signaling via increased ROS production as well as by facilitating the interaction between integrin and the cell cytoskeleton. Binds heparan sulfate glycosaminoglycans. In Rattus norvegicus (Rat), this protein is Peptidyl-prolyl cis-trans isomerase A (Ppia).